A 207-amino-acid chain; its full sequence is Thymidylate kinase (207 aa).

ATP is bound at residue 10-17 (GIEGSGKS).

This sequence belongs to the thymidylate kinase family.

It carries out the reaction dTMP + ATP = dTDP + ADP. Functionally, phosphorylation of dTMP to form dTDP in both de novo and salvage pathways of dTTP synthesis. The protein is Thymidylate kinase of Halothermothrix orenii (strain H 168 / OCM 544 / DSM 9562).